We begin with the raw amino-acid sequence, 445 residues long: Cyclic GMP-AMP phosphodiesterase SMPDL3A (445 aa).

A signal peptide spans 1–22; it reads MALLGNFLCCLLVAWLCGPGLG. Positions 42 and 44 each coordinate Zn(2+). Residues Cys59 and Cys78 are joined by a disulfide bond. N-linked (GlcNAc...) asparagine glycosylation is present at Asn66. Asp107 serves as a coordination point for Zn(2+). Residue His111 participates in ATP binding. N-linked (GlcNAc...) asparagine glycosylation occurs at Asn128. Asn148 provides a ligand contact to Zn(2+). ATP is bound by residues Asn148 and His149. N-linked (GlcNAc...) asparagine glycans are attached at residues Asn219 and Asn235. His249 provides a ligand contact to Zn(2+). Tyr257 lines the ATP pocket. Residues His290 and His292 each coordinate Zn(2+). Residues Asn353 and Asn364 are each glycosylated (N-linked (GlcNAc...) asparagine). Cystine bridges form between Cys417–Cys421 and Cys427–Cys440.

It belongs to the acid sphingomyelinase family. As to quaternary structure, monomer. Homodimer; homodimerizes following 2',3'-cGAMP-binding. Zn(2+) serves as cofactor. N-glycosylated. Detected in blood serum (at protein level).

It is found in the secreted. It carries out the reaction 2',3'-cGAMP + H2O = 5'-pGpA(2'-5') + H(+). The enzyme catalyses 5'-pGpA(2'-5') + H2O = 5'-GpA(2'-5') + phosphate. The catalysed reaction is a ribonucleoside 5'-triphosphate + H2O = a ribonucleoside 5'-diphosphate + phosphate + H(+). It catalyses the reaction ATP + H2O = ADP + phosphate + H(+). With respect to regulation, requires micromolar levels of Zn(2+) for activity. Inhibited by millimolar levels of Zn(2+). Cyclic-nucleotide phosphodiesterase that acts as a negative regulator of innate immunity by mediating degradation of 2',3'-cGAMP, thereby inhibiting the cGAS-STING signaling. Specifically linearizes 2',3'-cGAMP into 2'5'-bond pGpA and further hydrolyzes pGpA to produce GpA. Also has in vitro nucleotide phosphodiesterase activity with nucleoside triphosphates, such as ATP. Has in vitro activity with p-nitrophenyl-TMP. Has lower activity with nucleoside diphosphates, and no activity with nucleoside monophosphates. Has in vitro activity with CDP-choline, giving rise to CMP and phosphocholine. Has in vitro activity with CDP-ethanolamine. Does not have sphingomyelin phosphodiesterase activity. This is Cyclic GMP-AMP phosphodiesterase SMPDL3A from Mus musculus (Mouse).